Here is a 129-residue protein sequence, read N- to C-terminus: NADH-quinone oxidoreductase subunit A (129 aa).

Helical transmembrane passes span 6 to 26, 63 to 83, and 89 to 109; these read FWPF…IVGF, LVAV…AWAV, and GWIG…ALIY.

It belongs to the complex I subunit 3 family. In terms of assembly, NDH-1 is composed of 14 different subunits. Subunits NuoA, H, J, K, L, M, N constitute the membrane sector of the complex.

It localises to the cell inner membrane. The catalysed reaction is a quinone + NADH + 5 H(+)(in) = a quinol + NAD(+) + 4 H(+)(out). Functionally, NDH-1 shuttles electrons from NADH, via FMN and iron-sulfur (Fe-S) centers, to quinones in the respiratory chain. The immediate electron acceptor for the enzyme in this species is believed to be ubiquinone. Couples the redox reaction to proton translocation (for every two electrons transferred, four hydrogen ions are translocated across the cytoplasmic membrane), and thus conserves the redox energy in a proton gradient. This chain is NADH-quinone oxidoreductase subunit A, found in Nitrosococcus oceani (strain ATCC 19707 / BCRC 17464 / JCM 30415 / NCIMB 11848 / C-107).